Here is a 328-residue protein sequence, read N- to C-terminus: GMP reductase (328 aa).

Cys176 functions as the Thioimidate intermediate in the catalytic mechanism. 205–228 (IIADGGIRTHGDIAKSIRFGASMI) is a binding site for NADP(+).

This sequence belongs to the IMPDH/GMPR family. GuaC type 2 subfamily.

It carries out the reaction IMP + NH4(+) + NADP(+) = GMP + NADPH + 2 H(+). Functionally, catalyzes the irreversible NADPH-dependent deamination of GMP to IMP. It functions in the conversion of nucleobase, nucleoside and nucleotide derivatives of G to A nucleotides, and in maintaining the intracellular balance of A and G nucleotides. The protein is GMP reductase of Streptococcus pneumoniae (strain CGSP14).